Consider the following 211-residue polypeptide: Protein-L-isoaspartate O-methyltransferase (211 aa).

Residue serine 60 is part of the active site.

This sequence belongs to the methyltransferase superfamily. L-isoaspartyl/D-aspartyl protein methyltransferase family.

Its subcellular location is the cytoplasm. The catalysed reaction is [protein]-L-isoaspartate + S-adenosyl-L-methionine = [protein]-L-isoaspartate alpha-methyl ester + S-adenosyl-L-homocysteine. Its function is as follows. Catalyzes the methyl esterification of L-isoaspartyl residues in peptides and proteins that result from spontaneous decomposition of normal L-aspartyl and L-asparaginyl residues. It plays a role in the repair and/or degradation of damaged proteins. The sequence is that of Protein-L-isoaspartate O-methyltransferase from Pseudomonas savastanoi pv. phaseolicola (strain 1448A / Race 6) (Pseudomonas syringae pv. phaseolicola (strain 1448A / Race 6)).